We begin with the raw amino-acid sequence, 110 residues long: Parvalbumin alpha (110 aa).

The residue at position 2 (Ser-2) is an N-acetylserine. Residues Ser-2, Ser-8, and Ser-24 each carry the phosphoserine modification. EF-hand domains are found at residues 39-74 (KSADDVKKVFHILDKDKSGFIEEDELGSILKGFSSD) and 78-110 (LSAKETKTLMAAGDKDGDGKIGVEEFSTLVAES). The Ca(2+) site is built by Asp-52, Asp-54, Ser-56, Phe-58, Glu-60, and Glu-63. A Phosphoserine modification is found at Ser-66. Residues Asp-91, Asp-93, Asp-95, Lys-97, and Glu-102 each contribute to the Ca(2+) site.

In terms of biological role, in muscle, parvalbumin is thought to be involved in relaxation after contraction. It binds two calcium ions. The sequence is that of Parvalbumin alpha (Pvalb) from Rattus norvegicus (Rat).